We begin with the raw amino-acid sequence, 89 residues long: Small ribosomal subunit protein uS15 (89 aa).

Belongs to the universal ribosomal protein uS15 family. As to quaternary structure, part of the 30S ribosomal subunit. Forms a bridge to the 50S subunit in the 70S ribosome, contacting the 23S rRNA.

Its function is as follows. One of the primary rRNA binding proteins, it binds directly to 16S rRNA where it helps nucleate assembly of the platform of the 30S subunit by binding and bridging several RNA helices of the 16S rRNA. Forms an intersubunit bridge (bridge B4) with the 23S rRNA of the 50S subunit in the ribosome. In Chromohalobacter salexigens (strain ATCC BAA-138 / DSM 3043 / CIP 106854 / NCIMB 13768 / 1H11), this protein is Small ribosomal subunit protein uS15.